The chain runs to 289 residues: Bis(5'-nucleosyl)-tetraphosphatase, symmetrical (289 aa).

It belongs to the Ap4A hydrolase family.

It catalyses the reaction P(1),P(4)-bis(5'-adenosyl) tetraphosphate + H2O = 2 ADP + 2 H(+). Its function is as follows. Hydrolyzes diadenosine 5',5'''-P1,P4-tetraphosphate to yield ADP. The sequence is that of Bis(5'-nucleosyl)-tetraphosphatase, symmetrical from Yersinia pestis bv. Antiqua (strain Antiqua).